We begin with the raw amino-acid sequence, 270 residues long: 4-hydroxy-tetrahydrodipicolinate reductase (270 aa).

NAD(+)-binding positions include 9–14 (GAGGRM) and Glu-35. Arg-36 serves as a coordination point for NADP(+). NAD(+) contacts are provided by residues 99 to 101 (GTT) and 123 to 126 (ASNY). His-156 (proton donor/acceptor) is an active-site residue. Position 157 (His-157) interacts with (S)-2,3,4,5-tetrahydrodipicolinate. The Proton donor role is filled by Lys-160. A (S)-2,3,4,5-tetrahydrodipicolinate-binding site is contributed by 166–167 (GT).

It belongs to the DapB family.

The protein resides in the cytoplasm. It carries out the reaction (S)-2,3,4,5-tetrahydrodipicolinate + NAD(+) + H2O = (2S,4S)-4-hydroxy-2,3,4,5-tetrahydrodipicolinate + NADH + H(+). It catalyses the reaction (S)-2,3,4,5-tetrahydrodipicolinate + NADP(+) + H2O = (2S,4S)-4-hydroxy-2,3,4,5-tetrahydrodipicolinate + NADPH + H(+). Its pathway is amino-acid biosynthesis; L-lysine biosynthesis via DAP pathway; (S)-tetrahydrodipicolinate from L-aspartate: step 4/4. Its function is as follows. Catalyzes the conversion of 4-hydroxy-tetrahydrodipicolinate (HTPA) to tetrahydrodipicolinate. The polypeptide is 4-hydroxy-tetrahydrodipicolinate reductase (Mannheimia succiniciproducens (strain KCTC 0769BP / MBEL55E)).